The sequence spans 537 residues: Leucine-rich repeat LGI family member 4 (537 aa).

An N-terminal signal peptide occupies residues 1-19; it reads MGGAGILLFLLAWAGAGVA. LRR repeat units follow at residues 53-74, 77-98, 101-122, and 125-146; these read TLLS…SFLK, SLHL…AFIG, YLQY…ALRG, and SLTH…LFRG. The LRRCT domain occupies 158–208; the sequence is NPFQCDCRVLWLLQWMPTVNASVGTGACAGPPAVAQIQLNHLDPKKFKCRA. Asn177 carries an N-linked (GlcNAc...) asparagine glycan. EAR repeat units follow at residues 210-252, 256-298, 302-349, 351-394, 396-439, 441-483, and 487-532; these read ELSW…VWDY, RFRP…SRSS, RLTP…CRDG, GFYP…HWVG, RFER…RWDG, MFRL…RFES, and ILEP…QHHE.

Can bind to ADAM11, ADAM22 and ADAM23. Brain. Expressed in the entire developing peripheral nerves. Strongly expressed in the trigeminal nerve and ganglion and particularly abundant in the boundary cap cells - a transient population of cells that contributes to the Schwann cell population of the dorsal root nerve.

It localises to the secreted. Its function is as follows. Component of Schwann cell signaling pathway(s) that controls axon segregation and myelin formation. This is Leucine-rich repeat LGI family member 4 (Lgi4) from Mus musculus (Mouse).